The sequence spans 337 residues: Heat-inducible transcription repressor HrcA (337 aa).

This sequence belongs to the HrcA family.

In terms of biological role, negative regulator of class I heat shock genes (grpE-dnaK-dnaJ and groELS operons). Prevents heat-shock induction of these operons. This is Heat-inducible transcription repressor HrcA from Polaromonas naphthalenivorans (strain CJ2).